Reading from the N-terminus, the 300-residue chain is Zinc finger protein 705B (300 aa).

In terms of domain architecture, KRAB spans 7-78 (VTFEDVAIDF…GRVFLQDQNP (72 aa)). 3 consecutive C2H2-type zinc fingers follow at residues 172–194 (YQCN…KMTH), 200–222 (YACH…EKTH), and 228–250 (YKCH…ERTH). The C2H2-type 4; degenerate zinc-finger motif lies at 256–278 (YECDKSGKAFSQSSGFRGNKIIH).

The protein belongs to the krueppel C2H2-type zinc-finger protein family.

The protein localises to the nucleus. Functionally, may be involved in transcriptional regulation. The chain is Zinc finger protein 705B (ZNF705B) from Homo sapiens (Human).